The following is a 210-amino-acid chain: uncharacterized protein (210 aa).

Positions 1–17 are cleaved as a signal peptide; it reads MKRTAVSLCLLTGLLSG. Cysteine 18 carries the N-palmitoyl cysteine lipid modification. The S-diacylglycerol cysteine moiety is linked to residue cysteine 18. Residues 176–195 are compositionally biased toward polar residues; that stretch reads EMKTSPQGSPVSENENANGE. Residues 176–210 are disordered; sequence EMKTSPQGSPVSENENANGETRQDMKIDRNDKNAR. Positions 196-210 are enriched in basic and acidic residues; it reads TRQDMKIDRNDKNAR.

The protein resides in the cell membrane. This is an uncharacterized protein from Bacillus subtilis (strain 168).